A 74-amino-acid chain; its full sequence is MKTQIVILFISMIMLQMFVQIEGGFWGSLWEGVKSVVGKRGLRNLDDLDDLDLDHLFDSDVSDADLRLLKQMFR.

The N-terminal stretch at 1-23 (MKTQIVILFISMIMLQMFVQIEG) is a signal peptide. Val37 is modified (valine amide). Positions 41–74 (GLRNLDDLDDLDLDHLFDSDVSDADLRLLKQMFR) are excised as a propeptide.

It belongs to the non-disulfide-bridged peptide (NDBP) superfamily. Short antimicrobial peptide (group 4) family. Expressed by the venom gland.

The protein localises to the secreted. Its subcellular location is the target cell membrane. Functionally, antimicrobial peptide that is rapidly bactericidal against Gram-positive bacteria (MIC=12.5 ug/ml against S.aureus, and MIC=100 ug/ml against M.luteus). Is also active against clinical antibiotics-resistant bacterial strains. The chain is Amphipathic peptide CT1 from Scorpiops tibetanus (Scorpion).